A 195-amino-acid polypeptide reads, in one-letter code: Penicillin-binding protein activator LpoB (195 aa).

The first 16 residues, 1–16 (MKKYLFVALAALVLTG), serve as a signal peptide directing secretion. A lipid anchor (N-palmitoyl cysteine) is attached at cysteine 17. Cysteine 17 carries the S-diacylglycerol cysteine lipid modification. The segment at 19 to 55 (SRPPEPEQPQPPVTVEPVTPPVVEEPQPPVTEPVPQP) is disordered. 2 stretches are compositionally biased toward pro residues: residues 24–38 (PEQPQPPVTVEPVTP) and 44–55 (PQPPVTEPVPQP).

This sequence belongs to the LpoB family. As to quaternary structure, interacts with PBP1b.

Its subcellular location is the cell outer membrane. Its function is as follows. Regulator of peptidoglycan synthesis that is essential for the function of penicillin-binding protein 1B (PBP1b). This chain is Penicillin-binding protein activator LpoB, found in Serratia proteamaculans (strain 568).